The following is a 257-amino-acid chain: tRNA dimethylallyltransferase (257 aa).

Residue 15-22 (GPTASGKS) coordinates ATP. Substrate is bound at residue 17 to 22 (TASGKS).

Belongs to the IPP transferase family. Monomer. Requires Mg(2+) as cofactor.

The enzyme catalyses adenosine(37) in tRNA + dimethylallyl diphosphate = N(6)-dimethylallyladenosine(37) in tRNA + diphosphate. Catalyzes the transfer of a dimethylallyl group onto the adenine at position 37 in tRNAs that read codons beginning with uridine, leading to the formation of N6-(dimethylallyl)adenosine (i(6)A). This chain is tRNA dimethylallyltransferase, found in Oenococcus oeni (strain ATCC BAA-331 / PSU-1).